We begin with the raw amino-acid sequence, 399 residues long: Alpha-tubulin N-acetyltransferase (399 aa).

One can recognise an N-acetyltransferase domain in the interval 1-178 (MEFNFIINKL…NNFVVFDQYF (178 aa)). Residues 112–125 (FYVHESCQRQGYGK) and 148–157 (SPKLIAFLKK) contribute to the acetyl-CoA site. Positions 183–193 (SSQNKQNQNTR) are enriched in polar residues. A disordered region spans residues 183–223 (SSQNKQNQNTRSYSQPYSDYSSQIPTNYPQQQQQQSNSKSY). Low complexity predominate over residues 194-223 (SYSQPYSDYSSQIPTNYPQQQQQQSNSKSY).

This sequence belongs to the acetyltransferase ATAT1 family.

The enzyme catalyses L-lysyl-[alpha-tubulin] + acetyl-CoA = N(6)-acetyl-L-lysyl-[alpha-tubulin] + CoA + H(+). In terms of biological role, specifically acetylates 'Lys-40' in alpha-tubulin on the lumenal side of microtubules. Promotes microtubule destabilization and accelerates microtubule dynamics; this activity may be independent of acetylation activity. Acetylates alpha-tubulin with a slow enzymatic rate, due to a catalytic site that is not optimized for acetyl transfer. Enters the microtubule through each end and diffuses quickly throughout the lumen of microtubules. Acetylates only long/old microtubules because of its slow acetylation rate since it does not have time to act on dynamically unstable microtubules before the enzyme is released. This is Alpha-tubulin N-acetyltransferase from Tetrahymena thermophila (strain SB210).